Here is a 185-residue protein sequence, read N- to C-terminus: Protein GrpE (185 aa).

A disordered region spans residues M1 to P22.

The protein belongs to the GrpE family. As to quaternary structure, homodimer.

It is found in the cytoplasm. Participates actively in the response to hyperosmotic and heat shock by preventing the aggregation of stress-denatured proteins, in association with DnaK and GrpE. It is the nucleotide exchange factor for DnaK and may function as a thermosensor. Unfolded proteins bind initially to DnaJ; upon interaction with the DnaJ-bound protein, DnaK hydrolyzes its bound ATP, resulting in the formation of a stable complex. GrpE releases ADP from DnaK; ATP binding to DnaK triggers the release of the substrate protein, thus completing the reaction cycle. Several rounds of ATP-dependent interactions between DnaJ, DnaK and GrpE are required for fully efficient folding. This chain is Protein GrpE, found in Bordetella petrii (strain ATCC BAA-461 / DSM 12804 / CCUG 43448).